A 622-amino-acid polypeptide reads, in one-letter code: Arginine--tRNA ligase (622 aa).

The 'HIGH' region signature appears at 127 to 137; sequence ANPVHPLHVGH.

The protein belongs to the class-I aminoacyl-tRNA synthetase family.

The protein resides in the cytoplasm. The catalysed reaction is tRNA(Arg) + L-arginine + ATP = L-arginyl-tRNA(Arg) + AMP + diphosphate. The protein is Arginine--tRNA ligase of Ignicoccus hospitalis (strain KIN4/I / DSM 18386 / JCM 14125).